The chain runs to 118 residues: Beta-elicitin cryptogein (118 aa).

The signal sequence occupies residues 1–20 (MNFTALLAAVAAALVGSANA). Cystine bridges form between Cys23–Cys91, Cys47–Cys76, and Cys71–Cys115.

Belongs to the elicitin family.

The protein localises to the secreted. Induces local and distal defense responses (incompatible hypersensitive reaction) in plants from the solanaceae and cruciferae families. Elicits leaf necrosis and causes the accumulation of pathogenesis-related proteins. Might interact with the lipidic molecules of the plasma membrane. The polypeptide is Beta-elicitin cryptogein (Phytophthora cryptogea).